Consider the following 334-residue polypeptide: GTP 3',8-cyclase (334 aa).

The Radical SAM core domain maps to 11 to 236 (GFNRKIDYLR…ESTESSMGPA (226 aa)). Arg-20 is a GTP binding site. [4Fe-4S] cluster-binding residues include Cys-27 and Cys-31. Tyr-33 contributes to the S-adenosyl-L-methionine binding site. Cys-34 contributes to the [4Fe-4S] cluster binding site. Position 69 (Arg-69) interacts with GTP. Gly-73 lines the S-adenosyl-L-methionine pocket. Thr-100 lines the GTP pocket. S-adenosyl-L-methionine is bound at residue Ser-124. Lys-161 contributes to the GTP binding site. S-adenosyl-L-methionine is bound at residue Met-195. [4Fe-4S] cluster contacts are provided by Cys-260 and Cys-263. A GTP-binding site is contributed by 265–267 (RVR). Position 277 (Cys-277) interacts with [4Fe-4S] cluster.

This sequence belongs to the radical SAM superfamily. MoaA family. As to quaternary structure, monomer and homodimer. Requires [4Fe-4S] cluster as cofactor.

It carries out the reaction GTP + AH2 + S-adenosyl-L-methionine = (8S)-3',8-cyclo-7,8-dihydroguanosine 5'-triphosphate + 5'-deoxyadenosine + L-methionine + A + H(+). The protein operates within cofactor biosynthesis; molybdopterin biosynthesis. In terms of biological role, catalyzes the cyclization of GTP to (8S)-3',8-cyclo-7,8-dihydroguanosine 5'-triphosphate. The protein is GTP 3',8-cyclase of Pseudomonas putida (strain ATCC 47054 / DSM 6125 / CFBP 8728 / NCIMB 11950 / KT2440).